A 354-amino-acid chain; its full sequence is tRNase Z TRZ2, chloroplastic (354 aa).

The interval 1 to 21 (MQLSSSFPISPPKIFPSTKHH) is disordered. The transit peptide at 1–68 (MQLSSSFPIS…EEEEEYRKAR (68 aa)) directs the protein to the chloroplast.

The protein belongs to the RNase Z family. In terms of assembly, homodimer. It depends on Zn(2+) as a cofactor. The cofactor is Ca(2+). Mn(2+) serves as cofactor. Requires Mg(2+) as cofactor. Highly expressed in green and actively dividing tissues.

Its subcellular location is the plastid. The protein localises to the chloroplast. The catalysed reaction is Endonucleolytic cleavage of RNA, removing extra 3' nucleotides from tRNA precursor, generating 3' termini of tRNAs. A 3'-hydroxy group is left at the tRNA terminus and a 5'-phosphoryl group is left at the trailer molecule.. Its function is as follows. Zinc phosphodiesterase, which displays tRNA 3'-processing endonuclease activity. Involved in tRNA maturation, by removing a 3'-trailer from precursor tRNA. The protein is tRNase Z TRZ2, chloroplastic of Arabidopsis thaliana (Mouse-ear cress).